The chain runs to 360 residues: Phospho-N-acetylmuramoyl-pentapeptide-transferase (360 aa).

Helical transmembrane passes span 26-46, 72-92, 94-114, 132-152, 168-188, 199-219, 236-256, 263-283, 288-308, and 338-358; these read AIVSLLTALFISLWMGPRMIA, PTMGGIMILTSITVSVLLWAY, SNPYVWCVLFVLVGYGIVGFV, WKYFWQSAIALVVAFVMYMIG, VMPQLGLLYLLLAYFVIVGTS, GLAIMPTVFVAAGFALVAWAT, AGELVIVCTAIVGAGLGFLWF, VFMGDVGSLALGGALGTIAVL, FLLVIMGGVFVVETLSVILQV, and VIVRFWIISLMLVLIGLATLK.

This sequence belongs to the glycosyltransferase 4 family. MraY subfamily. Mg(2+) serves as cofactor.

Its subcellular location is the cell inner membrane. It carries out the reaction UDP-N-acetyl-alpha-D-muramoyl-L-alanyl-gamma-D-glutamyl-meso-2,6-diaminopimeloyl-D-alanyl-D-alanine + di-trans,octa-cis-undecaprenyl phosphate = di-trans,octa-cis-undecaprenyl diphospho-N-acetyl-alpha-D-muramoyl-L-alanyl-D-glutamyl-meso-2,6-diaminopimeloyl-D-alanyl-D-alanine + UMP. It functions in the pathway cell wall biogenesis; peptidoglycan biosynthesis. Catalyzes the initial step of the lipid cycle reactions in the biosynthesis of the cell wall peptidoglycan: transfers peptidoglycan precursor phospho-MurNAc-pentapeptide from UDP-MurNAc-pentapeptide onto the lipid carrier undecaprenyl phosphate, yielding undecaprenyl-pyrophosphoryl-MurNAc-pentapeptide, known as lipid I. This chain is Phospho-N-acetylmuramoyl-pentapeptide-transferase, found in Erwinia tasmaniensis (strain DSM 17950 / CFBP 7177 / CIP 109463 / NCPPB 4357 / Et1/99).